We begin with the raw amino-acid sequence, 379 residues long: MTNIRKNHPLLKIINNSLIDLPTPPNISSLWNFGSLLGACLTIQIITGLFLAMHYTADTTTAFSSVTHICRDVNYGWTIRYLHANGASVFFLCLFIHVGRGLYYGSFTLLETWNVGIILLFSVMATAFMGYVLPWGQMSFWGATVITNLLSAIPYIGTDLVEWIWGGFSVSKATLTRFFALHFVLPFVILALVMIHLLFLHETGSNNPLGTSSNSDKIPFHPYYTTKDFLGLLLLILLLMVLTLFYPDLLGDPDNYSPANPLNTPPHIKPEWYFLFAYAILRSIPNKLGGVMALILSILILAIIPLLQPNKQQTMMFRPLSQFLFWILVADLLTLTWIGGQPVEDPFITIGQVASILYFLLMVLIMPTTCLIENKMLKW.

4 consecutive transmembrane segments (helical) span residues 33 to 53 (FGSL…FLAM), 77 to 98 (WTIR…FIHV), 113 to 133 (WNVG…GYVL), and 178 to 198 (FFAL…IHLL). The heme b site is built by histidine 83 and histidine 97. The heme b site is built by histidine 182 and histidine 196. Histidine 201 is an a ubiquinone binding site. The next 4 membrane-spanning stretches (helical) occupy residues 226–246 (TKDF…TLFY), 288–308 (LGGV…PLLQ), 320–340 (LSQF…WIGG), and 347–367 (FITI…LIMP).

The protein belongs to the cytochrome b family. As to quaternary structure, the cytochrome bc1 complex contains 11 subunits: 3 respiratory subunits (MT-CYB, CYC1 and UQCRFS1), 2 core proteins (UQCRC1 and UQCRC2) and 6 low-molecular weight proteins (UQCRH/QCR6, UQCRB/QCR7, UQCRQ/QCR8, UQCR10/QCR9, UQCR11/QCR10 and a cleavage product of UQCRFS1). This cytochrome bc1 complex then forms a dimer. Heme b serves as cofactor.

The protein localises to the mitochondrion inner membrane. Component of the ubiquinol-cytochrome c reductase complex (complex III or cytochrome b-c1 complex) that is part of the mitochondrial respiratory chain. The b-c1 complex mediates electron transfer from ubiquinol to cytochrome c. Contributes to the generation of a proton gradient across the mitochondrial membrane that is then used for ATP synthesis. The polypeptide is Cytochrome b (MT-CYB) (Lepilemur edwardsi (Milne-Edwards's sportive lemur)).